We begin with the raw amino-acid sequence, 84 residues long: MNLFDFFRGRQKQTSASVAKERLQIIVAHERGQRSEPDYLPALQKELLEVIRKYVNIGSDDVHIELENQGSCSILELNITLPDR.

The protein belongs to the MinE family.

Its function is as follows. Prevents the cell division inhibition by proteins MinC and MinD at internal division sites while permitting inhibition at polar sites. This ensures cell division at the proper site by restricting the formation of a division septum at the midpoint of the long axis of the cell. This chain is Cell division topological specificity factor, found in Pseudomonas putida (strain W619).